The sequence spans 728 residues: LPS-assembly protein LptD (728 aa).

Residues 1–21 (MSALPGFTLAALLLNVSLAEA) form the signal peptide.

The protein belongs to the LptD family. Component of the lipopolysaccharide transport and assembly complex. Interacts with LptE and LptA.

The protein resides in the cell outer membrane. Together with LptE, is involved in the assembly of lipopolysaccharide (LPS) at the surface of the outer membrane. This Thiobacillus denitrificans (strain ATCC 25259 / T1) protein is LPS-assembly protein LptD.